The following is a 1288-amino-acid chain: Structural maintenance of chromosomes protein 4 (1288 aa).

Polar residues predominate over residues 1–10; that stretch reads MPRKGTQPST. Residues 1–55 are disordered; it reads MPRKGTQPSTARRREEGPPPPSPDGASSDAEPEPPSGRTESPATAAETASEELDN. A phosphoserine mark is found at S22 and S28. A Phosphothreonine modification is found at T39. The segment covering 39 to 48 has biased composition (low complexity); it reads TESPATAAET. Phosphoserine is present on residues S41 and S50. An ATP-binding site is contributed by 113–120; it reads GPNGSGKS. Position 143 is a phosphoserine (S143). Residues 272 to 588 are a coiled coil; that stretch reads RRVEILNEHR…LFQKVEEAKS (317 aa). An N6-acetyllysine mark is found at K381 and K679. In terms of domain architecture, SMC hinge spans 613–727; it reads PGIYGRLGDL…ADNLDQATRV (115 aa). The stretch at 767–1020 forms a coiled coil; it reads LVIEISEEEV…ALSIKLKLEQ (254 aa). Residues S982 and S1056 each carry the phosphoserine modification. Residues 1109-1129 adopt a coiled-coil conformation; that stretch reads ELDKITYERDSFRQAYEDLRK.

This sequence belongs to the SMC family. SMC4 subfamily. In terms of assembly, forms a heterodimer with SMC2. Component of the condensin complex, which contains the SMC2 and SMC4 heterodimer, and three non SMC subunits that probably regulate the complex: BRRN1/CAPH, CNAP1/CAPD2 and CAPG. As to expression, widely expressed. Higher expression in testis, colon, thymus.

It localises to the nucleus. It is found in the cytoplasm. The protein resides in the chromosome. Functionally, central component of the condensin complex, a complex required for conversion of interphase chromatin into mitotic-like condense chromosomes. The condensin complex probably introduces positive supercoils into relaxed DNA in the presence of type I topoisomerases and converts nicked DNA into positive knotted forms in the presence of type II topoisomerases. The polypeptide is Structural maintenance of chromosomes protein 4 (SMC4) (Homo sapiens (Human)).